Here is a 126-residue protein sequence, read N- to C-terminus: Penton protein P31 (126 aa).

The protein localises to the virion. In association with P2 and trimeric P5, forms the spike complexes located at the 5-fold vertices of the capsid. Essential for viral infectivity. The protein is Penton protein P31 (XXXI) of Acinetobacter calcoaceticus (Arthrobacter siderocapsulatus).